Here is a 60-residue protein sequence, read N- to C-terminus: MAKVKVTLIRSVTHRQPTQRRTVKALGLGKLHSSVILPDNAATRGAIFKVAHLVSIEEVK.

It belongs to the universal ribosomal protein uL30 family. As to quaternary structure, part of the 50S ribosomal subunit.

The polypeptide is Large ribosomal subunit protein uL30 (Limosilactobacillus fermentum (strain NBRC 3956 / LMG 18251) (Lactobacillus fermentum)).